The primary structure comprises 223 residues: Ribose-5-phosphate isomerase A (223 aa).

Residues 28–31, 81–84, and 94–97 each bind substrate; these read TGST, DGAD, and KGGG. The active-site Proton acceptor is the E103. A substrate-binding site is contributed by K121.

It belongs to the ribose 5-phosphate isomerase family. In terms of assembly, homodimer.

The catalysed reaction is aldehydo-D-ribose 5-phosphate = D-ribulose 5-phosphate. It participates in carbohydrate degradation; pentose phosphate pathway; D-ribose 5-phosphate from D-ribulose 5-phosphate (non-oxidative stage): step 1/1. Functionally, catalyzes the reversible conversion of ribose-5-phosphate to ribulose 5-phosphate. The polypeptide is Ribose-5-phosphate isomerase A (Ruthia magnifica subsp. Calyptogena magnifica).